The sequence spans 350 residues: Protein disulfide isomerase Creld2 (350 aa).

Positions 1 to 22 are cleaved as a signal peptide; it reads MHLLLAAAFGLLLLLPPPGAVA. Residues 29–32 carry the CXXC motif; sequence CQRC. 4 cysteine pairs are disulfide-bonded: C29–C32, C138–C152, C146–C164, and C166–C175. The 43-residue stretch at 134-176 folds into the EGF-like 1 domain; that stretch reads DCQECQGGSERPCSGNGYCSGDGSRQGDGSCQCHTGYKGPLCI. The stretch at 191-238 is one FU 1 repeat; it reads HSICSACDESCKTCSGPSNKDCIQCEVGWARVEDACVDVDECAAETSP. N-linked (GlcNAc...) asparagine glycosylation is present at N249. An FU 2 repeat occupies 251–298; sequence SYTCEDCDSTCVGCTGKGPANCKECIAGYTKESGQCTDIDECSLEEKA. Residues 261-264 carry the CXXC motif; that stretch reads CVGC. 4 disulfides stabilise this stretch: C261–C264, C292–C306, C299–C315, and C317–C328. One can recognise an EGF-like 2; calcium-binding domain in the interval 288–329; that stretch reads DIDECSLEEKACKRKNENCYNVPGSFVCVCPEGFEETEDACV.

Belongs to the CRELD family. In terms of assembly, interacts with CHRNA4. Component of a complex containing at least CRELD2, MANF, MATN3 and PDIA4. Expressed in chondrocytes (at protein level).

It localises to the endoplasmic reticulum. The catalysed reaction is Catalyzes the rearrangement of -S-S- bonds in proteins.. In terms of biological role, protein disulfide isomerase. Might play a role in the unfolded protein response. May regulate transport of alpha4-beta2 neuronal acetylcholine receptor. In Mus musculus (Mouse), this protein is Protein disulfide isomerase Creld2 (Creld2).